We begin with the raw amino-acid sequence, 221 residues long: Succinate--CoA ligase [ADP-forming] subunit beta, mitochondrial (221 aa).

The 122-residue stretch at 1–122 (DVVIKAQVLA…DSNSAYRQKI (122 aa)) folds into the ATP-grasp domain. K5 provides a ligand contact to ATP. 2 positions are modified to N6-acetyllysine: K22 and K26. S114 carries the post-translational modification Phosphoserine. A Phosphothreonine modification is found at T139. Position 171–173 (171–173 (GIM)) interacts with substrate. K196 carries the N6-acetyllysine modification.

This sequence belongs to the succinate/malate CoA ligase beta subunit family. ATP-specific subunit beta subfamily. As to quaternary structure, heterodimer of an alpha and a beta subunit. The beta subunit determines specificity for ATP. Interacts with ALAS2.

The protein localises to the mitochondrion. The enzyme catalyses succinate + ATP + CoA = succinyl-CoA + ADP + phosphate. The protein operates within carbohydrate metabolism; tricarboxylic acid cycle; succinate from succinyl-CoA (ligase route): step 1/1. Its function is as follows. ATP-specific succinyl-CoA synthetase functions in the citric acid cycle (TCA), coupling the hydrolysis of succinyl-CoA to the synthesis of ATP and thus represents the only step of substrate-level phosphorylation in the TCA. The beta subunit provides nucleotide specificity of the enzyme and binds the substrate succinate, while the binding sites for coenzyme A and phosphate are found in the alpha subunit. In Mesocricetus auratus (Golden hamster), this protein is Succinate--CoA ligase [ADP-forming] subunit beta, mitochondrial.